We begin with the raw amino-acid sequence, 64 residues long: Large ribosomal subunit protein bL35 (64 aa).

Positions 1–23 (MPKMKTHRGAAKRFKKTKNKIKR) are disordered.

The protein belongs to the bacterial ribosomal protein bL35 family.

The polypeptide is Large ribosomal subunit protein bL35 (Nitratiruptor sp. (strain SB155-2)).